A 375-amino-acid chain; its full sequence is Protein NDRG3 (375 aa).

A disordered region spans residues Arg-326–Cys-375. Low complexity predominate over residues Ser-348–Gln-363. A compositionally biased stretch (polar residues) spans Ile-364–Cys-375.

The protein belongs to the NDRG family.

In Xenopus laevis (African clawed frog), this protein is Protein NDRG3.